Consider the following 233-residue polypeptide: Pyridoxine 5'-phosphate synthase (233 aa).

Asn6 contributes to the 3-amino-2-oxopropyl phosphate binding site. Position 8–9 (8–9 (DH)) interacts with 1-deoxy-D-xylulose 5-phosphate. Arg17 contacts 3-amino-2-oxopropyl phosphate. The active-site Proton acceptor is His42. 1-deoxy-D-xylulose 5-phosphate is bound by residues Arg44 and His49. Glu69 (proton acceptor) is an active-site residue. Position 99 (Thr99) interacts with 1-deoxy-D-xylulose 5-phosphate. His186 (proton donor) is an active-site residue. 3-amino-2-oxopropyl phosphate is bound by residues Gly187 and 208–209 (GH).

It belongs to the PNP synthase family. In terms of assembly, homooctamer; tetramer of dimers.

The protein resides in the cytoplasm. The catalysed reaction is 3-amino-2-oxopropyl phosphate + 1-deoxy-D-xylulose 5-phosphate = pyridoxine 5'-phosphate + phosphate + 2 H2O + H(+). Its pathway is cofactor biosynthesis; pyridoxine 5'-phosphate biosynthesis; pyridoxine 5'-phosphate from D-erythrose 4-phosphate: step 5/5. In terms of biological role, catalyzes the complicated ring closure reaction between the two acyclic compounds 1-deoxy-D-xylulose-5-phosphate (DXP) and 3-amino-2-oxopropyl phosphate (1-amino-acetone-3-phosphate or AAP) to form pyridoxine 5'-phosphate (PNP) and inorganic phosphate. The protein is Pyridoxine 5'-phosphate synthase of Anaplasma phagocytophilum (strain HZ).